Reading from the N-terminus, the 1241-residue chain is Intraflagellar transport protein 122 homolog (1241 aa).

4 WD repeats span residues K10–K50, G51–T91, N93–H129, and S131–I169. Residues V222–N246 form a disordered region. Acidic residues predominate over residues E229–P242. 3 WD repeats span residues A278–V317, E319–Y359, and K512–Q551.

As to quaternary structure, component of the IFT complex A (IFT-A) complex. IFT-A complex is divided into a core subcomplex composed of IFT122:IFT140:WDR19 which is associated with TULP3 and a peripheral subcomplex composed of IFT43:WDR35:TTC21B. Interacts with IFT43:WDR35; the interaction connects the 2 IFT-A subcomplexes. Interacts with IFTAP; the interaction associates IFTAP with IFT-A complex. As to expression, expressed in many tissues. Predominant expression in testis and pituitary.

It localises to the cell projection. The protein localises to the cilium. The protein resides in the cytoplasm. It is found in the cytoskeleton. Its subcellular location is the cilium basal body. As a component of the IFT complex A (IFT-A), a complex required for retrograde ciliary transport and entry into cilia of G protein-coupled receptors (GPCRs), it is required in ciliogenesis and ciliary protein trafficking. Involved in cilia formation during neuronal patterning. Acts as a negative regulator of Shh signaling. Required to recruit TULP3 to primary cilia. The polypeptide is Intraflagellar transport protein 122 homolog (Homo sapiens (Human)).